A 360-amino-acid polypeptide reads, in one-letter code: Magnesium-protoporphyrin IX monomethyl ester [oxidative] cyclase (360 aa).

It belongs to the AcsF family. Fe cation serves as cofactor.

The enzyme catalyses Mg-protoporphyrin IX 13-monomethyl ester + 3 NADPH + 3 O2 + 2 H(+) = 3,8-divinyl protochlorophyllide a + 3 NADP(+) + 5 H2O. Its pathway is porphyrin-containing compound metabolism; chlorophyll biosynthesis (light-independent). Its function is as follows. Catalyzes the formation of the isocyclic ring in chlorophyll biosynthesis. Mediates the cyclase reaction, which results in the formation of divinylprotochlorophyllide (Pchlide) characteristic of all chlorophylls from magnesium-protoporphyrin IX 13-monomethyl ester (MgPMME). The polypeptide is Magnesium-protoporphyrin IX monomethyl ester [oxidative] cyclase (Synechococcus sp. (strain WH7803)).